Here is a 98-residue protein sequence, read N- to C-terminus: MSLLDYFRSSKSKTASVAKERLQILVAHERYYRNKPSYLPQLQEELMQVIRKYVQVDQDAISVKFEQDDNQETLELNIILPDSQNTRNTQQDAVRNSF.

This sequence belongs to the MinE family.

Prevents the cell division inhibition by proteins MinC and MinD at internal division sites while permitting inhibition at polar sites. This ensures cell division at the proper site by restricting the formation of a division septum at the midpoint of the long axis of the cell. This chain is Cell division topological specificity factor, found in Nitrosomonas europaea (strain ATCC 19718 / CIP 103999 / KCTC 2705 / NBRC 14298).